The following is a 273-amino-acid chain: ATP synthase subunit a (273 aa).

The next 5 membrane-spanning stretches (helical) occupy residues W44–Y64, I104–I124, D149–I169, L223–W243, and A244–V264.

Belongs to the ATPase A chain family. In terms of assembly, F-type ATPases have 2 components, CF(1) - the catalytic core - and CF(0) - the membrane proton channel. CF(1) has five subunits: alpha(3), beta(3), gamma(1), delta(1), epsilon(1). CF(0) has three main subunits: a(1), b(2) and c(9-12). The alpha and beta chains form an alternating ring which encloses part of the gamma chain. CF(1) is attached to CF(0) by a central stalk formed by the gamma and epsilon chains, while a peripheral stalk is formed by the delta and b chains.

It is found in the cell inner membrane. Its function is as follows. Key component of the proton channel; it plays a direct role in the translocation of protons across the membrane. In Shewanella putrefaciens (strain CN-32 / ATCC BAA-453), this protein is ATP synthase subunit a.